Consider the following 294-residue polypeptide: Ribosomal RNA small subunit methyltransferase H (294 aa).

Residues 36–38 (GGH), Asp-55, Phe-82, Asp-97, and Gln-104 each bind S-adenosyl-L-methionine. Positions 265-285 (KPTVATDDEQNRNPRSRSAKW) are disordered.

This sequence belongs to the methyltransferase superfamily. RsmH family.

It localises to the cytoplasm. It carries out the reaction cytidine(1402) in 16S rRNA + S-adenosyl-L-methionine = N(4)-methylcytidine(1402) in 16S rRNA + S-adenosyl-L-homocysteine + H(+). In terms of biological role, specifically methylates the N4 position of cytidine in position 1402 (C1402) of 16S rRNA. The protein is Ribosomal RNA small subunit methyltransferase H of Synechococcus sp. (strain CC9902).